Here is a 309-residue protein sequence, read N- to C-terminus: Elongation factor Ts (309 aa).

Positions 82–85 (TDFV) are involved in Mg(2+) ion dislocation from EF-Tu.

Belongs to the EF-Ts family.

The protein resides in the cytoplasm. Its function is as follows. Associates with the EF-Tu.GDP complex and induces the exchange of GDP to GTP. It remains bound to the aminoacyl-tRNA.EF-Tu.GTP complex up to the GTP hydrolysis stage on the ribosome. In Rickettsia typhi (strain ATCC VR-144 / Wilmington), this protein is Elongation factor Ts.